We begin with the raw amino-acid sequence, 1374 residues long: Alpha,alpha-trehalose-phosphate synthase [UDP-forming] 1 (1374 aa).

Disordered regions lie at residues 28–66, 86–117, and 1352–1374; these read DTGKVPTAPPDVFFSTENEPEDCTPVKMDPFDRPKSDKD, YTPGKEKGVDQDESDDMTESEDHDEMAKDDEG, and KADSYYDDSDTPMDQEDTPSKQQ. Composition is skewed to basic and acidic residues over residues 56–66 and 86–95; these read DPFDRPKSDKD and YTPGKEKGVD. Composition is skewed to acidic residues over residues 96–109 and 1356–1368; these read QDESDDMTESEDHD and YYDDSDTPMDQED.

This sequence in the N-terminal section; belongs to the glycosyltransferase 20 family. In the C-terminal section; belongs to the gob-1 trehalose phosphatase family.

It catalyses the reaction D-glucose 6-phosphate + UDP-alpha-D-glucose = alpha,alpha-trehalose 6-phosphate + UDP + H(+). In terms of biological role, catalyzes the production of trehalose from glucose-6-phosphate and UDP-alpha-D-glucose in a 2 step process. In Caenorhabditis briggsae, this protein is Alpha,alpha-trehalose-phosphate synthase [UDP-forming] 1 (tps-1).